Reading from the N-terminus, the 707-residue chain is Choline transporter-like protein 4 (707 aa).

Residues 1-32 (MGRKQNENEAHGNSAKYDPSFRGPIKNRGCTD) are Cytoplasmic-facing. Residues 33–53 (IICCVLFLIFILGYIIVGLVA) traverse the membrane as a helical segment. The Extracellular segment spans residues 54–227 (WVYGDPRQVL…KIFEDFAQSW (174 aa)). Residues N67, N185, N195, and N196 are each glycosylated (N-linked (GlcNAc...) asparagine). Residues 228–248 (YWILVALGVALALSLLFILLL) traverse the membrane as a helical segment. Residues 249-250 (RL) lie on the Cytoplasmic side of the membrane. A helical transmembrane segment spans residues 251–271 (VAAPLVLLLIVGVLAVLAYGI). Residues 272-307 (YHCWQQYQVFRDKGASITQLGFTTNFSAYQSVKETW) are Extracellular-facing. N296 carries N-linked (GlcNAc...) asparagine glycosylation. The helical transmembrane segment at 308-328 (LAALIVLAVLEGILLLMLIFL) threads the bilayer. Over 329–356 (RQRIRIAIALLKEASRAVGQMMSTMFYP) the chain is Cytoplasmic. The helical transmembrane segment at 357–377 (LVTFVLLVICIGYWAVTALYL) threads the bilayer. Over 378–452 (ATSGQPQYIY…GVLGLFWTVN (75 aa)) the chain is Extracellular. 3 N-linked (GlcNAc...) asparagine glycosylation sites follow: N391, N403, and N413. The chain crosses the membrane as a helical span at residues 453-473 (WVLALGQCVLAGAFASFYWAF). Residues 474 to 498 (HKPRDIPTFPLSSAFIRTLRYHTGS) are Cytoplasmic-facing. The helical transmembrane segment at 499–519 (LAFGALILSLVQIARVILEYI) threads the bilayer. The Extracellular segment spans residues 520 to 557 (DHKLRGSQNPVARCIICCFKCCLWCLEKFIKFLNRNAY). A helical membrane pass occupies residues 558–578 (IMIAIYGKNFCVSAKNAFMLL). At 579-594 (MRNVLRVVVLDKVTDL) the chain is on the cytoplasmic side. A helical transmembrane segment spans residues 595–615 (LLFFGKLLVVGGVGVLSFFFF). Residues 616–635 (SGRIKGLGKDFENPNLNYYW) are Extracellular-facing. Residues 636-656 (LPIMTSIMGAYVIASGFFSVF) traverse the membrane as a helical segment. At 657–707 (GMCVDTLFLCFLEDLERNDGSQERPYYMPKALLKILGKKNEAPTGGKTRKK) the chain is on the cytoplasmic side.

Belongs to the CTL (choline transporter-like) family. N-glycosylated; N-glycosylation of Asn-67 and Asn-391 is required for a proper thiamine pyrophosphate uptake. In terms of tissue distribution, expressed in colon and cecum.

The protein resides in the membrane. Its subcellular location is the apical cell membrane. The enzyme catalyses choline(out) + n H(+)(in) = choline(in) + n H(+)(out). It catalyses the reaction thiamine diphosphate(out) = thiamine diphosphate(in). Choline transporter that plays a role in the choline-acetylcholine system and is required to the efferent innervation of hair cells in the olivocochlear bundle for the maintenance of physiological function of outer hair cells and the protection of hair cells from acoustic injury. Also described as a thiamine pyrophosphate transporter in colon, may mediate the absorption of microbiota-generated thiamine pyrophosphate and contribute to host thiamine (vitamin B1) homeostasis. The protein is Choline transporter-like protein 4 of Mus musculus (Mouse).